Here is a 118-residue protein sequence, read N- to C-terminus: MARIAGVNIPVNKHIVIGLRSIYGVGQTTAQKICADVNIDPTTKVRELTEEQLEALRSEVTKFKIEGDLRRDVTMNIKRLMDMGCYRGIRHRRSLPLRGQRTKNNARTRKGPKKPIKR.

The tract at residues histidine 91 to arginine 118 is disordered.

This sequence belongs to the universal ribosomal protein uS13 family. Part of the 30S ribosomal subunit. Forms a loose heterodimer with protein S19. Forms two bridges to the 50S subunit in the 70S ribosome.

In terms of biological role, located at the top of the head of the 30S subunit, it contacts several helices of the 16S rRNA. In the 70S ribosome it contacts the 23S rRNA (bridge B1a) and protein L5 of the 50S subunit (bridge B1b), connecting the 2 subunits; these bridges are implicated in subunit movement. Contacts the tRNAs in the A and P-sites. This Hydrogenovibrio crunogenus (strain DSM 25203 / XCL-2) (Thiomicrospira crunogena) protein is Small ribosomal subunit protein uS13.